Reading from the N-terminus, the 176-residue chain is Peptide deformylase 1 (176 aa).

Residues Cys-99 and His-141 each contribute to the Fe cation site. Glu-142 is a catalytic residue. His-145 contributes to the Fe cation binding site.

This sequence belongs to the polypeptide deformylase family. It depends on Fe(2+) as a cofactor.

It catalyses the reaction N-terminal N-formyl-L-methionyl-[peptide] + H2O = N-terminal L-methionyl-[peptide] + formate. Functionally, removes the formyl group from the N-terminal Met of newly synthesized proteins. Requires at least a dipeptide for an efficient rate of reaction. N-terminal L-methionine is a prerequisite for activity but the enzyme has broad specificity at other positions. The protein is Peptide deformylase 1 of Bordetella pertussis (strain Tohama I / ATCC BAA-589 / NCTC 13251).